The sequence spans 170 residues: Lipoprotein signal peptidase (170 aa).

The next 4 helical transmembrane spans lie at 11 to 31 (LGWL…KLHF), 41 to 61 (IVVI…AAFS), 69 to 89 (WQRW…VVWL), and 95 to 115 (NETW…GNLY). Catalysis depends on residues D125 and D144. The helical transmembrane segment at 136 to 156 (YFPAFNFADSAITVGAVMLAL) threads the bilayer.

This sequence belongs to the peptidase A8 family.

The protein localises to the cell inner membrane. The catalysed reaction is Release of signal peptides from bacterial membrane prolipoproteins. Hydrolyzes -Xaa-Yaa-Zaa-|-(S,diacylglyceryl)Cys-, in which Xaa is hydrophobic (preferably Leu), and Yaa (Ala or Ser) and Zaa (Gly or Ala) have small, neutral side chains.. Its pathway is protein modification; lipoprotein biosynthesis (signal peptide cleavage). Its function is as follows. This protein specifically catalyzes the removal of signal peptides from prolipoproteins. This Pseudomonas fluorescens (strain ATCC BAA-477 / NRRL B-23932 / Pf-5) protein is Lipoprotein signal peptidase.